A 470-amino-acid polypeptide reads, in one-letter code: MATFMTEDFLLKNDIARTLYHKYAAPMPIYDFHCHLSPQEIADDRRFDNLGQIWLEGDHYKWRALRSAGVDESLITGKETSDYEKYMAWANTVPKTLGNPLYHWTHLELRRPFGITGTLFGPDTAESIWTQCNEKLATPAFSARGIMQQMNVRMVGTTDDPIDSLEYHRQIAADDSIDIEVAPSWRPDKVFKIELDGFVDYLRKLEAAADVSITRFDDLRQALTRRLDHFAACGCRASDHGIETLRFAPVPDDAQLDAILGKRLAGETLSELEIAQFTTAVLVWLGRQYAARGWVMQLHIGAIRNNNTRMFRLLGPDTGFDSIGDNNISWALSRLLDSMDVTNELPKTILYCLNPRDNEVLATMIGNFQGPGIAGKVQFGSGWWFNDQKDGMLRQLEQLSQMGLLSQFVGMLTDSRSFLSYTRHEYFRRILCNLLGQWAQDGEIPDDEAMLSRMVQDICFNNAQRYFTIK.

Belongs to the metallo-dependent hydrolases superfamily. Uronate isomerase family.

The catalysed reaction is D-glucuronate = D-fructuronate. It catalyses the reaction aldehydo-D-galacturonate = keto-D-tagaturonate. It functions in the pathway carbohydrate metabolism; pentose and glucuronate interconversion. The polypeptide is Uronate isomerase (Salmonella agona (strain SL483)).